A 162-amino-acid polypeptide reads, in one-letter code: Phosphopantetheine adenylyltransferase (162 aa).

Residue S9 coordinates substrate. ATP is bound by residues 9–10 (SF) and H17. 3 residues coordinate substrate: K41, T73, and R87. Residues 88 to 90 (GLR), E98, and 123 to 129 (YSFISSS) contribute to the ATP site.

Belongs to the bacterial CoaD family. In terms of assembly, homohexamer. It depends on Mg(2+) as a cofactor.

The protein localises to the cytoplasm. The catalysed reaction is (R)-4'-phosphopantetheine + ATP + H(+) = 3'-dephospho-CoA + diphosphate. The protein operates within cofactor biosynthesis; coenzyme A biosynthesis; CoA from (R)-pantothenate: step 4/5. Functionally, reversibly transfers an adenylyl group from ATP to 4'-phosphopantetheine, yielding dephospho-CoA (dPCoA) and pyrophosphate. This Carboxydothermus hydrogenoformans (strain ATCC BAA-161 / DSM 6008 / Z-2901) protein is Phosphopantetheine adenylyltransferase.